The primary structure comprises 446 residues: Cytochrome P450 monooxygenase ATR14 (446 aa).

Residues 403–446 (NFTYPDEFRPDRWLDDRDQKEYEHDHGDAMQPFSVGPRDCPSQK) form a disordered region. Over residues 408-430 (DEFRPDRWLDDRDQKEYEHDHGD) the composition is skewed to basic and acidic residues. Heme is bound at residue cysteine 442.

Belongs to the cytochrome P450 family. The cofactor is heme.

Its pathway is mycotoxin biosynthesis. Cytochrome P450 monooxygenase; part of the core atranone cluster (CAC) which products are predicted to catalyze most or all steps of mycotoxin atranone synthesis, starting from geranylgeranyl pyrophosphate (GGPP). The initial cyclization of GGPP to dolabellane is probably performed by the terpene cyclase ATR13. The Baeyer-Villiger oxidation near the end of the atranone synthesis, which converts atranones D and E to atranones F and G is predicted to be catalyzed by the monooxygenase ATR8. Of the CAC's other predicted gene products, the reducing PKS ATR6 might synthesize a polyketide chain. This polyketide is probably transferred onto the atranone backbone by the polyketide transferase ATR5. Other predicted CAC products include 4 oxygenases (ATR2, ATR3, ATR4, and ATR14), 3 short-chain reductases (ATR7, ATR9, and ATR10), and a methyltransferase (ATR12). These may all be involved in the various steps of atranone biosynthesis, although their specific roles must await experimental determination. The sequence is that of Cytochrome P450 monooxygenase ATR14 from Stachybotrys chlorohalonatus (strain IBT 40285).